A 487-amino-acid chain; its full sequence is ATP-dependent rRNA helicase RRP3 (487 aa).

Residues 22-67 (IKRKALEKQQQAHANEPSPSDEDSAQSNSKDSNSNEQPEESEEIFE) are disordered. Positions 67–95 (ESFTELDLVPELIEACKNLNYNKPTPIQS) match the Q motif motif. A Helicase ATP-binding domain is found at 98–270 (IPPALKGSDI…RASLTNPVKC (173 aa)). Residue 111 to 118 (AQTGSGKT) participates in ATP binding. The short motif at 217-220 (DEAD) is the DEAD box element. The region spanning 298 to 442 (LIYLLNEFIG…ENVDKDAILA (145 aa)) is the Helicase C-terminal domain. The disordered stretch occupies residues 459 to 487 (NRRNKEKQARGKGRRGRMATRDNMDREER). Positions 477 to 487 (ATRDNMDREER) are enriched in basic and acidic residues.

This sequence belongs to the DEAD box helicase family. DDX47/RRP3 subfamily. As to quaternary structure, interacts with the SSU processome.

It localises to the nucleus. The catalysed reaction is ATP + H2O = ADP + phosphate + H(+). Its function is as follows. ATP-dependent rRNA helicase required for pre-ribosomal RNA processing. Involved in the maturation of the 35S-pre-rRNA and to its cleavage to mature 18S rRNA. In Kluyveromyces lactis (strain ATCC 8585 / CBS 2359 / DSM 70799 / NBRC 1267 / NRRL Y-1140 / WM37) (Yeast), this protein is ATP-dependent rRNA helicase RRP3.